Reading from the N-terminus, the 338-residue chain is MTRF1L release factor glutamine methyltransferase (338 aa).

Residues 167–171, aspartate 190, tryptophan 225, and asparagine 239 contribute to the S-adenosyl-L-methionine site; that span reads GCGSG. Substrate is bound at residue 239–242; that stretch reads NPPY.

The protein belongs to the protein N5-glutamine methyltransferase family.

The protein resides in the mitochondrion. It carries out the reaction L-glutaminyl-[peptide chain release factor] + S-adenosyl-L-methionine = N(5)-methyl-L-glutaminyl-[peptide chain release factor] + S-adenosyl-L-homocysteine + H(+). In terms of biological role, N5-glutamine methyltransferase responsible for the methylation of the glutamine residue in the universally conserved GGQ motif of the mitochondrial translation release factors MTRF1, MTRF1L, MRPL58/ICT1 and MTRFR. The polypeptide is MTRF1L release factor glutamine methyltransferase (HEMK1) (Homo sapiens (Human)).